A 319-amino-acid chain; its full sequence is Transaldolase (319 aa).

Lys126 (schiff-base intermediate with substrate) is an active-site residue.

This sequence belongs to the transaldolase family. Type 1 subfamily. As to quaternary structure, homodimer.

It localises to the cytoplasm. It catalyses the reaction D-sedoheptulose 7-phosphate + D-glyceraldehyde 3-phosphate = D-erythrose 4-phosphate + beta-D-fructose 6-phosphate. The protein operates within carbohydrate degradation; pentose phosphate pathway; D-glyceraldehyde 3-phosphate and beta-D-fructose 6-phosphate from D-ribose 5-phosphate and D-xylulose 5-phosphate (non-oxidative stage): step 2/3. Functionally, transaldolase is important for the balance of metabolites in the pentose-phosphate pathway. The chain is Transaldolase from Bordetella avium (strain 197N).